Reading from the N-terminus, the 606-residue chain is Elongation factor 4 (606 aa).

A tr-type G domain is found at 10-192; the sequence is ENIRNFSIIA…AIVQQLPAPK (183 aa). GTP contacts are provided by residues 22-27 and 139-142; these read DHGKST and NKID.

This sequence belongs to the TRAFAC class translation factor GTPase superfamily. Classic translation factor GTPase family. LepA subfamily.

It is found in the cell membrane. The enzyme catalyses GTP + H2O = GDP + phosphate + H(+). Functionally, required for accurate and efficient protein synthesis under certain stress conditions. May act as a fidelity factor of the translation reaction, by catalyzing a one-codon backward translocation of tRNAs on improperly translocated ribosomes. Back-translocation proceeds from a post-translocation (POST) complex to a pre-translocation (PRE) complex, thus giving elongation factor G a second chance to translocate the tRNAs correctly. Binds to ribosomes in a GTP-dependent manner. In Lawsonia intracellularis (strain PHE/MN1-00), this protein is Elongation factor 4.